The following is a 771-amino-acid chain: Endoplasmin homolog (771 aa).

A signal peptide spans 1–24 (MANSSLLRVVLVALLLLGSVTVSA). 3 residues coordinate ATP: asparagine 63, aspartate 109, and phenylalanine 160. N-linked (GlcNAc...) asparagine glycosylation occurs at asparagine 63. Residues 254–282 (AATPESAAEERSLDEGAVEEDPDKEGDTQ) form a disordered region. Residues asparagine 306 and asparagine 402 are each glycosylated (N-linked (GlcNAc...) asparagine). The tract at residues 727-771 (ADDSLLPPDDAEYTVSDTETEEEEEQPKVDTNAHEEAETDGEGDL) is disordered. The span at 752 to 762 (QPKVDTNAHEE) shows a compositional bias: basic and acidic residues. Residues 768 to 771 (EGDL) carry the Prevents secretion from ER motif.

This sequence belongs to the heat shock protein 90 family. As to quaternary structure, homotetramer.

The protein localises to the endoplasmic reticulum. Molecular chaperone that functions in the processing and transport of secreted proteins. Required for the synthesis of lipophosphoglycan (LPG), a cell surface glycoconjugate. Necessary for the attachment of the galactosyl residue to the mannose within the phosphoglycan repeats of the nascent LPG chain. Also required for addition of phosphoglycan to acid phosphatase. Not required for normal growth. Has ATPase activity. Binds heparin with micromolar affinity which may facilitate infection of host cells. This is Endoplasmin homolog from Leishmania donovani.